We begin with the raw amino-acid sequence, 360 residues long: Sphingolipid delta(4)-desaturase (360 aa).

The next 3 helical transmembrane spans lie at 67 to 87 (AVVLLQLSIAYALKNTPVLSF), 89 to 109 (FLALAYVVGATANQNCFLCIH), and 125 to 145 (LFAIWVNLPIGVPYSASFQPY). The Histidine box-1 signature appears at 109–113 (HELSH). The Histidine box-2 motif lies at 146 to 150 (HQLHH). 3 consecutive transmembrane segments (helical) span residues 170 to 190 (VLSSLLGKAFFATFQIFFYAL), 202 to 222 (FIHLLNVLVCLVSDFILIKFG), and 228 to 248 (WYLILSSFFAGSLHPTAGHFI). The Histidine box-3 motif lies at 288–292 (HNEHH).

The protein belongs to the fatty acid desaturase type 1 family. DEGS subfamily.

The protein localises to the membrane. The enzyme catalyses an N-acylsphinganine + 2 Fe(II)-[cytochrome b5] + O2 + 2 H(+) = an N-acylsphing-4-enine + 2 Fe(III)-[cytochrome b5] + 2 H2O. It participates in lipid metabolism; sphingolipid metabolism. Functionally, delta(4)-fatty-acid desaturase which introduces a double bond at the 4-position in the long-chain base (LCB) of ceramides. Required for the formation of the monounsaturated sphingoid base (E)-sphing-4-enine during glucosylceramide (GluCer) biosynthesis. The polypeptide is Sphingolipid delta(4)-desaturase (Komagataella phaffii (strain GS115 / ATCC 20864) (Yeast)).